Consider the following 539-residue polypeptide: Phosphatidylinositol 4-phosphate 5-kinase type-1 beta (539 aa).

Residues M1 to Y21 form a disordered region. In terms of domain architecture, PIPK spans A25 to V395. 3 positions are modified to phosphoserine: S445, S447, and S448.

In terms of assembly, interacts with RAC1, AJUBA, PLD1, PLD2 and ARF1. Highly expressed in brain and testis. Barely detectable in liver and skeletal muscle.

The protein resides in the cytoplasm. It is found in the cytosol. It localises to the cell membrane. The protein localises to the endomembrane system. It catalyses the reaction a 1,2-diacyl-sn-glycero-3-phospho-(1D-myo-inositol 4-phosphate) + ATP = a 1,2-diacyl-sn-glycero-3-phospho-(1D-myo-inositol-4,5-bisphosphate) + ADP + H(+). It carries out the reaction 1-octadecanoyl-2-(5Z,8Z,11Z,14Z)-eicosatetraenoyl-sn-glycero-3-phospho-1D-myo-inositol 4-phosphate + ATP = 1-octadecanoyl-2-(5Z,8Z,11Z,14Z)-eicosatetraenoyl-sn-glycero-3-phospho-1D-myo-inositol 4,5-bisphosphate + ADP + H(+). The catalysed reaction is 1-octadecanoyl-2-(9Z)-octadecenoyl-sn-glycero-3-phospho-1D-myo-inositol 4-phosphate + ATP = 1-octadecanoyl-2-(9Z)-octadecenoyl-sn-glycero-3-phospho-1D-myo-inositol 4,5-bisphosphate + ADP + H(+). The enzyme catalyses 1-octadecanoyl-2-(9Z)-octadecenoyl-sn-glycero-3-phospho-1D-myo-inositol + ATP = 1-octadecanoyl-2-(9Z)-octadecenoyl-sn-glycero-3-phospho-1D-myo-inositol 5-phosphate + ADP + H(+). It catalyses the reaction 1-octadecanoyl-2-(9Z,12Z)-octadecadienoyl-sn-glycero-3-phospho-1D-myo-inositol + ATP = 1-octadecanoyl-2-(9Z,12Z)-octadecadienoyl-sn-glycero-3-phospho-1D-myo-inositol 5-phosphate + ADP + H(+). It carries out the reaction 1-octadecanoyl-2-(5Z,8Z,11Z,14Z-eicosatetraenoyl)-sn-glycero-3-phospho-(1D-myo-inositol) + ATP = 1-octadecanoyl-2-(5Z,8Z,11Z,14Z)-eicosatetraenoyl-sn-glycero-3-phospho-1D-myo-inositol 5-phosphate + ADP + H(+). The catalysed reaction is 1,2-di-(9Z,12Z)-octadecadienoyl-sn-glycero-3-phospho-1D-myo-inositol + ATP = 1,2-di(9Z,12Z)-octadecadienoyl-sn-glycero-3-phospho-1D-myo-inositol 5-phosphate + ADP + H(+). With respect to regulation, activated by phosphatidic acid. In terms of biological role, catalyzes the phosphorylation of phosphatidylinositol 4-phosphate (PtdIns(4)P/PI4P) to form phosphatidylinositol 4,5-bisphosphate (PtdIns(4,5)P2/PIP2), a lipid second messenger that regulates several cellular processes such as signal transduction, vesicle trafficking, actin cytoskeleton dynamics, cell adhesion, and cell motility. PtdIns(4,5)P2 can directly act as a second messenger or can be utilized as a precursor to generate other second messengers: inositol 1,4,5-trisphosphate (IP3), diacylglycerol (DAG) or phosphatidylinositol-3,4,5-trisphosphate (PtdIns(3,4,5)P3/PIP3). Mediates RAC1-dependent reorganization of actin filaments. Contributes to the activation of phospholipase PLD2. Together with PIP5K1A, is required, after stimulation by G-protein coupled receptors, for the synthesis of IP3 that will induce stable platelet adhesion. This Mus musculus (Mouse) protein is Phosphatidylinositol 4-phosphate 5-kinase type-1 beta.